Here is a 125-residue protein sequence, read N- to C-terminus: UPF0102 protein Rpic_3463 (125 aa).

This sequence belongs to the UPF0102 family.

In Ralstonia pickettii (strain 12J), this protein is UPF0102 protein Rpic_3463.